The chain runs to 188 residues: Marginal zone B- and B1-cell-specific protein (188 aa).

The signal sequence occupies residues 1–21 (MRLPLPLLLLFGCRAILGSFG). 3 disulfides stabilise this stretch: Cys49–Cys177, Cys52–Cys170, and Cys94–Cys142. The Prevents secretion from ER signature appears at 185–188 (REEL).

Belongs to the MZB1 family. As to quaternary structure, part of the ER chaperone complex, a multi-protein complex in the endoplasmic reticulum containing a large number of molecular chaperones which associates with unassembled incompletely folded immunoglobulin heavy chains. Interacts with HSP90B1 and PDIA3 in a calcium-dependent manner. Post-translationally, forms an interchain disulfide bond with IgM monomers.

The protein resides in the endoplasmic reticulum lumen. Its subcellular location is the secreted. Functionally, associates with immunoglobulin M (IgM) heavy and light chains and promotes IgM assembly and secretion. May exert its effect by acting as a molecular chaperone or as an oxidoreductase as it displays a low level of oxidoreductase activity. Helps to diversify peripheral B-cell functions by regulating Ca(2+) stores, antibody secretion, and integrin activation. Acts as a hormone-regulated adipokine/pro-inflammatory cytokine that is implicated in causing chronic inflammation, affecting cellular expansion and blunting insulin response in adipocytes. May have a role in the onset of insulin resistance. This Rattus norvegicus (Rat) protein is Marginal zone B- and B1-cell-specific protein (Mzb1).